Reading from the N-terminus, the 162-residue chain is Shikimate kinase (162 aa).

Gly11–Ser16 is a binding site for ATP. Ser15 contacts Mg(2+). Asp33, Arg57, and Gly80 together coordinate substrate. Arg116 is an ATP binding site. Arg132 is a binding site for substrate.

This sequence belongs to the shikimate kinase family. Monomer. Mg(2+) serves as cofactor.

It localises to the cytoplasm. It catalyses the reaction shikimate + ATP = 3-phosphoshikimate + ADP + H(+). Its pathway is metabolic intermediate biosynthesis; chorismate biosynthesis; chorismate from D-erythrose 4-phosphate and phosphoenolpyruvate: step 5/7. In terms of biological role, catalyzes the specific phosphorylation of the 3-hydroxyl group of shikimic acid using ATP as a cosubstrate. This is Shikimate kinase from Helicobacter pylori (strain P12).